Here is a 257-residue protein sequence, read N- to C-terminus: RING1 and YY1-binding protein B (257 aa).

2 disordered regions span residues 1–24 and 45–257; these read MGDK…GFWD and RKGT…DESF. Residues 19-48 form a RanBP2-type zinc finger; that stretch reads DNGFWDCSVCTFRNSAEAFKCSICDVRKGT. Positions 74–129 are enriched in basic and acidic residues; that stretch reads PKKEKKEKPERPEKDRAEEERPDINPPDEHPVEQRDKDKSEKEQPEKEKKDREKEI. Positions 149–168 are enriched in polar residues; the sequence is HQSPPSERNSIQSGKSTTKT. Positions 169–178 are enriched in basic residues; that stretch reads KNSHNSRPKL. Over residues 209 to 233 the composition is skewed to low complexity; sequence TSSTSSSTVTSSASSEQQHQSSGSE.

The protein resides in the nucleus. It localises to the cytoplasm. Functionally, may be implicated in the regulation of the transcription as a repressor of the transcriptional activity of E4TF1. The protein is RING1 and YY1-binding protein B (rybpb) of Danio rerio (Zebrafish).